Consider the following 57-residue polypeptide: Delta-elapitoxin-Cb1a (57 aa).

4 cysteine pairs are disulfide-bonded: Cys-3-Cys-22, Cys-15-Cys-36, Cys-40-Cys-49, and Cys-50-Cys-55.

Belongs to the three-finger toxin family. Short-chain subfamily. Expressed by the venom gland.

It localises to the secreted. Functionally, this toxin shifts the voltage-dependence of Nav1.4/SCN4A activation to more hyperpolarised potentials, inhibits inactivation, and produces large ramp currents, consistent with its profound effects on contractile force in an isolated skeletal muscle preparation. This toxin produces large muscle contractions and fasciculations in the indirectly stimulated chick biventer cervicis nerve-muscle assay, which are significantly inhibited by the addition of the sodium channel antagonist tetrodotoxin. The sequence is that of Delta-elapitoxin-Cb1a from Calliophis bivirgatus (Blue Malaysian coral snake).